The sequence spans 206 residues: Flavin reductase (NADPH) (206 aa).

NADP(+) contacts are provided by Gly-10, Thr-12, Gly-13, Thr-15, Arg-35, Ser-38, and Arg-39. At Ser-42 the chain carries Phosphoserine. Positions 54, 55, 75, and 76 each coordinate NADP(+). Position 82 is a phosphoserine (Ser-82). 5 residues coordinate NADP(+): Met-87, Cys-109, His-132, His-153, and Ile-154. Catalysis depends on Cys-109, which acts as the S-nitroso-cysteine intermediate; for S-nitroso-CoA-dependent nitrosyltransferase activity. Catalysis depends on Cys-188, which acts as the S-nitroso-cysteine intermediate; for S-nitroso-CoA-dependent nitrosyltransferase activity.

Belongs to the BLVRB family. Monomer.

The protein localises to the cytoplasm. It carries out the reaction reduced riboflavin + NADP(+) = riboflavin + NADPH + 2 H(+). The enzyme catalyses bilirubin IXbeta + NADP(+) = biliverdin IXbeta + NADPH + H(+). It catalyses the reaction FMNH2 + NAD(+) = FMN + NADH + 2 H(+). The catalysed reaction is FMNH2 + NADP(+) = FMN + NADPH + 2 H(+). It carries out the reaction S-nitroso-CoA + L-cysteinyl-[protein] = S-nitroso-L-cysteinyl-[protein] + CoA. The enzyme catalyses L-cysteinyl-[SCAN] + S-nitroso-CoA = S-nitroso-L-cysteinyl-[SCAN] + CoA. It catalyses the reaction S-nitroso-L-cysteinyl-[SCAN] + L-cysteinyl-[protein] = L-cysteinyl-[SCAN] + S-nitroso-L-cysteinyl-[protein]. Its function is as follows. Enzyme that can both act as a NAD(P)H-dependent reductase and a S-nitroso-CoA-dependent nitrosyltransferase. Promotes fetal heme degradation during development. Also expressed in adult tissues, where it acts as a regulator of hematopoiesis, intermediary metabolism (glutaminolysis, glycolysis, TCA cycle and pentose phosphate pathway) and insulin signaling. Has a broad specificity oxidoreductase activity by catalyzing the NAD(P)H-dependent reduction of a variety of flavins, such as riboflavin, FAD or FMN, biliverdins, methemoglobin and PQQ (pyrroloquinoline quinone). Contributes to fetal heme catabolism by catalyzing reduction of biliverdin IXbeta into bilirubin IXbeta in the liver. Biliverdin IXbeta, which constitutes the major heme catabolite in the fetus is not present in adult. Does not reduce bilirubin IXalpha. Can also reduce the complexed Fe(3+) iron to Fe(2+) in the presence of FMN and NADPH. Acts as a protein nitrosyltransferase by catalyzing nitrosylation of cysteine residues of target proteins, such as HMOX2, INSR and IRS1. S-nitroso-CoA-dependent nitrosyltransferase activity is mediated via a 'ping-pong' mechanism: BLVRB first associates with both S-nitroso-CoA and protein substrate, nitric oxide group is then transferred from S-nitroso-CoA to Cys-109 and Cys-188 residues of BLVRB and from S-nitroso-BLVRB to the protein substrate. Inhibits insulin signaling by mediating nitrosylation of INSR and IRS1, leading to their inhibition. This Mus musculus (Mouse) protein is Flavin reductase (NADPH) (Blvrb).